The sequence spans 867 residues: Putative tyrosine-protein kinase F09A5.2 (867 aa).

Helical transmembrane passes span 45 to 65 (VMKI…FATS) and 355 to 375 (LLLI…AFFV). Asparagine 395 and asparagine 423 each carry an N-linked (GlcNAc...) asparagine glycan. The 291-residue stretch at 467-757 (VQEDHLLGNG…FNEMRGEITV (291 aa)) folds into the Protein kinase domain. 473-481 (LGNGAFANV) serves as a coordination point for ATP. N-linked (GlcNAc...) asparagine glycans are attached at residues asparagine 496 and asparagine 500. Lysine 516 serves as a coordination point for ATP. Residue asparagine 585 is glycosylated (N-linked (GlcNAc...) asparagine). The active-site Proton acceptor is aspartate 626. Disordered regions lie at residues 782–821 (LTMQ…GTCA) and 848–867 (SKSM…TYQS). Residues 801 to 810 (DMDEDGDYDS) show a composition bias toward acidic residues. A compositionally biased stretch (polar residues) spans 858-867 (SNSTVSTYQS). Residue asparagine 859 is glycosylated (N-linked (GlcNAc...) asparagine).

It belongs to the protein kinase superfamily. Tyr protein kinase family.

The protein resides in the membrane. The catalysed reaction is L-tyrosyl-[protein] + ATP = O-phospho-L-tyrosyl-[protein] + ADP + H(+). The protein is Putative tyrosine-protein kinase F09A5.2 of Caenorhabditis elegans.